Reading from the N-terminus, the 206-residue chain is Molybdopterin synthase catalytic subunit (206 aa).

Residues 1–23 show a composition bias toward polar residues; sequence MATQQPTQTDNSAQAQPPQTNPA. Positions 1–27 are disordered; it reads MATQQPTQTDNSAQAQPPQTNPAKPTE. Residues 131–132, Lys147, and 154–156 each bind substrate; these read HR and KRE. Basic and acidic residues predominate over residues 177–188; the sequence is KVDEPRIGKGEV. Residues 177–206 form a disordered region; it reads KVDEPRIGKGEVDEKEDEGDSGNGGNDRKS. A compositionally biased stretch (gly residues) spans 197–206; that stretch reads SGNGGNDRKS.

It belongs to the MoaE family. MOCS2B subfamily. In terms of assembly, heterotetramer; composed of 2 small (MOCS2A) and 2 large (MOCS2B) subunits.

The protein localises to the cytoplasm. The catalysed reaction is 2 [molybdopterin-synthase sulfur-carrier protein]-C-terminal-Gly-aminoethanethioate + cyclic pyranopterin phosphate + H2O = molybdopterin + 2 [molybdopterin-synthase sulfur-carrier protein]-C-terminal Gly-Gly + 2 H(+). It functions in the pathway cofactor biosynthesis; molybdopterin biosynthesis. Catalytic subunit of the molybdopterin synthase complex, a complex that catalyzes the conversion of precursor Z into molybdopterin. Acts by mediating the incorporation of 2 sulfur atoms from thiocarboxylated MOCS2A into precursor Z to generate a dithiolene group. The protein is Molybdopterin synthase catalytic subunit (nit-8) of Neurospora crassa (strain ATCC 24698 / 74-OR23-1A / CBS 708.71 / DSM 1257 / FGSC 987).